The sequence spans 486 residues: Patatin-like phospholipase domain-containing protein 2 (486 aa).

Topologically, residues 1 to 8 (MFPRETKW) are cytoplasmic. Residues 9–29 (NISFAGCGFLGVYHIGVASCL) traverse the membrane as a helical segment. In terms of domain architecture, PNPLA spans 10–179 (ISFAGCGFLG…SDNLPLYELK (170 aa)). The GXGXXG signature appears at 14 to 19 (GCGFLG). Residues 30–42 (REHAPFLVANATH) are Extracellular-facing. An N-linked (GlcNAc...) asparagine glycan is attached at N39. The helical transmembrane segment at 43–63 (IYGASAGALTATALVTGACLG) threads the bilayer. The GXSXG motif lies at 45 to 49 (GASAG). S47 acts as the Nucleophile in catalysis. At 64–137 (EAGANIIEVS…IISHFSSKDE (74 aa)) the chain is on the cytoplasmic side. A Glycyl lysine isopeptide (Lys-Gly) (interchain with G-Cter in ubiquitin) cross-link involves residue K92. Residues 138–158 (LIQANVCSTFIPVYCGLIPPT) form a helical membrane-spanning segment. The Extracellular portion of the chain corresponds to 159–331 (LQGVRYVDGG…TTLSNMLPVR (173 aa)). The active-site Proton acceptor is the D166. The DGA/G signature appears at 166 to 168 (DGG). The helical transmembrane segment at 332 to 352 (LATAMMVPYTLPLESAVSFTI) threads the bilayer. The Cytoplasmic portion of the chain corresponds to 353-486 (RLLEWLPDVP…PQDPPGLPPC (134 aa)). At S374 the chain carries Phosphoserine; in vitro. 2 positions are modified to phosphoserine; by PKA: S396 and S406. Phosphoserine; in vitro occurs at positions 430 and 468. Residues 465–476 (APASPTAADPAT) show a composition bias toward low complexity. Residues 465–486 (APASPTAADPATPQDPPGLPPC) form a disordered region. The segment covering 477-486 (PQDPPGLPPC) has biased composition (pro residues).

As to quaternary structure, interacts with ABHD5; this association stimulates PNPLA2 triglyceride hydrolase activity. Interacts with SERPINF1; this interaction stimulates the phospholipase A2 activity of PNPLA2. Despite a colocalization in lipid droplets, it probably does not interact with PLIN. Interacts with PLIN5; prevents interaction with ABHD5. Interacts with FAF2. In terms of processing, phosphorylation at Ser-406 by PKA is increased during fasting and moderate intensity exercise, and moderately increases lipolytic activity. Post-translationally, ubiquitinated by PEX2 in response to reactive oxygen species (ROS), leading to its degradation. Ubiquitination is stimulated by LDAH. In terms of tissue distribution, expressed at high levels in white and brown adipose tissue, and to a lesser degree in testis and cardiac muscle. Barely detected in liver, spleen, thymus, kidney, skeletal muscle, and brain. Among the white adipose depots, gonadal fat showed the highest level of expression compared with inguinal and renal white adipose tissues.

It localises to the lipid droplet. The protein resides in the cell membrane. It is found in the cytoplasm. It carries out the reaction a triacylglycerol + H2O = a diacylglycerol + a fatty acid + H(+). It catalyses the reaction a triacylglycerol + H2O = a 1,2-diacylglycerol + a fatty acid + H(+). The catalysed reaction is a triacylglycerol + H2O = a 1,3-diacylglycerol + a fatty acid + H(+). The enzyme catalyses a triacyl-sn-glycerol + H2O = a 2,3-diacyl-sn-glycerol + a fatty acid + H(+). It carries out the reaction a triacyl-sn-glycerol + H2O = a 1,3-diacyl-sn-glycerol + a fatty acid + H(+). It catalyses the reaction 1,2,3-tri-(9Z-octadecenoyl)-glycerol + H2O = 1,3-di-(9Z-octadecenoyl)-glycerol + (9Z)-octadecenoate + H(+). The catalysed reaction is 1,2,3-tri-(9Z)-hexadecenoylglycerol + H2O = 1,3-di-(9Z)-hexadecenoylglycerol + (9Z)-hexadecenoate + H(+). The enzyme catalyses 1,2,3-tri-(9Z,12Z)-octadecadienoylglycerol + H2O = 1,3-di-(9Z,12Z)-octadecadienoylglycerol + (9Z,12Z)-octadecadienoate + H(+). It carries out the reaction 1,2,3-tri-(9Z,12Z,15Z)-octadecatrienoylglycerol + H2O = 1,3-di-(9Z,12Z,15Z)-octadecatrienoylglycerol + (9Z,12Z,15Z)-octadecatrienoate + H(+). It catalyses the reaction 1,3-di-(9Z)-octadecenoyl-2-hexadecanoylglycerol + H2O = 1,3-di-(9Z-octadecenoyl)-glycerol + hexadecanoate + H(+). The catalysed reaction is 1,2-di-(9Z)-octadecenoyl-3-hexadecanoyl-sn-glycerol + H2O = 1-(9Z)-octadecenoyl-3-hexadecanoyl-sn-glycerol + (9Z)-octadecenoate + H(+). The enzyme catalyses 1-hexadecanoyl-2,3-di-(9Z)-octadecenoyl-sn-glycerol + H2O = 1-hexadecanoyl-3-(9Z)-octadecenoyl-sn-glycerol + (9Z)-octadecenoate + H(+). It carries out the reaction 1,2,3-tri-(9Z-octadecenoyl)-glycerol + H2O = 2,3-di-(9Z)-octadecenoyl-sn-glycerol + (9Z)-octadecenoate + H(+). It catalyses the reaction 1,2,3-tri-(9Z)-hexadecenoylglycerol + H2O = 2,3-di-(9Z)-hexadecenoyl-sn-glycerol + (9Z)-hexadecenoate + H(+). The catalysed reaction is 1,2,3-tri-(9Z,12Z)-octadecadienoylglycerol + H2O = 2,3-di-(9Z,12Z)-octadecadienoyl-sn-glycerol + (9Z,12Z)-octadecadienoate + H(+). The enzyme catalyses 1,2,3-tri-(9Z,12Z,15Z)-octadecatrienoylglycerol + H2O = 2,3-di-(9Z,12Z,15Z)-octadecatrienoyl-sn-glycerol + (9Z,12Z,15Z)-octadecatrienoate + H(+). It carries out the reaction 1,3-di-(9Z)-octadecenoyl-2-hexadecanoylglycerol + H2O = 2-hexadecanoyl-3-(9Z)-octadecenoyl-sn-glycerol + (9Z)-octadecenoate + H(+). It catalyses the reaction 1-hexadecanoyl-2,3-di-(9Z)-octadecenoyl-sn-glycerol + H2O = 2,3-di-(9Z)-octadecenoyl-sn-glycerol + hexadecanoate + H(+). The catalysed reaction is 1,2-di-(9Z)-octadecenoyl-3-hexadecanoyl-sn-glycerol + H2O = 2-(9Z-octadecenoyl)-3-hexadecanoyl-sn-glycerol + (9Z)-octadecenoate + H(+). The enzyme catalyses 1,2-di-(9Z-octadecenoyl)-glycerol + (9Z)-octadecenoate + H(+) = 1,2,3-tri-(9Z-octadecenoyl)-glycerol + H2O. It carries out the reaction a 1-acylglycerol + a 1,3-diacylglycerol = a triacylglycerol + glycerol. It catalyses the reaction a 1-acylglycerol + a 1,2-diacylglycerol = a triacylglycerol + glycerol. The catalysed reaction is 2 a 1-acylglycerol = a 1,2-diacylglycerol + glycerol. The enzyme catalyses a triacylglycerol + all-trans-retinol = an all-trans-retinyl ester + a diacylglycerol. It carries out the reaction 1-(9Z-octadecenoyl)-glycerol + 1,3-di-(9Z-octadecenoyl)-glycerol = 1,2,3-tri-(9Z-octadecenoyl)-glycerol + glycerol. It catalyses the reaction 1-(9Z-octadecenoyl)-glycerol + 1,2-di-(9Z-octadecenoyl)-glycerol = 1,2,3-tri-(9Z-octadecenoyl)-glycerol + glycerol. The catalysed reaction is 2 1-(9Z-octadecenoyl)-glycerol = 1,2-di-(9Z-octadecenoyl)-glycerol + glycerol. The enzyme catalyses 1,2,3-tri-(9Z-octadecenoyl)-glycerol + all-trans-retinol = all-trans-retinyl 9Z-octadecenoate + di-(9Z)-octadecenoylglycerol. It carries out the reaction a 1,2-diacyl-sn-glycero-3-phosphocholine + H2O = a 1-acyl-sn-glycero-3-phosphocholine + a fatty acid + H(+). It catalyses the reaction 1,2,3-tri-(9Z-octadecenoyl)-glycerol + 9-hydroxy-octadecanoate = 9-(9Z-octadecenoyloxy)-octadecanoate + 2,3-di-(9Z)-octadecenoyl-sn-glycerol. The catalysed reaction is 1-hexadecanoyl-2,3-di-(9Z)-octadecenoyl-sn-glycerol + 9-hydroxy-octadecanoate = 9-hexadecanoyloxy-octadecanoate + 2,3-di-(9Z)-octadecenoyl-sn-glycerol. The enzyme catalyses 1,2,3-tri-(10Z)-heptadecenoylglycerol + 9-hydroxy-octadecanoate = 2,3-di-(10Z-heptadecenoyl)-sn-glycerol + 9-(10Z-heptadecenoyloxy)-octadecanoate. It carries out the reaction 1,2,3-tri-(9Z,12Z)-octadecadienoylglycerol + 9-hydroxy-octadecanoate = 2,3-di-(9Z,12Z)-octadecadienoyl-sn-glycerol + 9-(9Z,12Z-octadecadienoyloxy)-octadecanoate. It catalyses the reaction 1,2,3-tri-(9Z)-hexadecenoylglycerol + 9-hydroxy-octadecanoate = 2,3-di-(9Z)-hexadecenoyl-sn-glycerol + 9-(9Z-hexadecenoyloxy)-octadecanoate. The catalysed reaction is 9-hydroxy-octadecanoate + 1,2-di-(9Z-octadecenoyl)-sn-glycerol = 9-(9Z-octadecenoyloxy)-octadecanoate + 2-(9Z-octadecenoyl)-glycerol. The enzyme catalyses 1-hexadecanoyl-2,3-di-(9Z)-octadecenoyl-sn-glycerol + 9-hydroxy-octadecanoate = 1-hexadecanoyl-3-(9Z)-octadecenoyl-sn-glycerol + 9-(9Z-octadecenoyloxy)-octadecanoate. Its pathway is glycerolipid metabolism; triacylglycerol degradation. Its activity is regulated as follows. Stimulated by PKA-dependent PLIN phosphorylation. In terms of biological role, catalyzes the initial step in triglyceride hydrolysis in adipocyte and non-adipocyte lipid droplets. Exhibits a strong preference for the hydrolysis of long-chain fatty acid esters at the sn-2 position of the glycerol backbone and acts coordinately with LIPE/HLS and DGAT2 within the lipolytic cascade. Also possesses acylglycerol transacylase and phospholipase A2 activities. Transfers fatty acid from triglyceride to retinol, hydrolyzes retinylesters, and generates 1,3-diacylglycerol from triglycerides. Regulates adiposome size and may be involved in the degradation of adiposomes. Catalyzes the formation of an ester bond between hydroxy fatty acids and fatty acids derived from triglycerides or diglycerides to generate fatty acid esters of hydroxy fatty acids (FAHFAs) in adipocytes. Acts antagonistically with LDAH in regulation of cellular lipid stores. Inhibits LDAH-stimulated lipid droplet fusion. May play an important role in energy homeostasis. May play a role in the response of the organism to starvation, enhancing hydrolysis of triglycerides and providing free fatty acids to other tissues to be oxidized in situations of energy depletion. The sequence is that of Patatin-like phospholipase domain-containing protein 2 from Mus musculus (Mouse).